A 234-amino-acid chain; its full sequence is Fibrillarin-like rRNA/tRNA 2'-O-methyltransferase (234 aa).

Residues 91–92 (TT), 110–111 (EF), 137–138 (DA), and 157–160 (DVAQ) contribute to the S-adenosyl-L-methionine site.

It belongs to the methyltransferase superfamily. Fibrillarin family. Interacts with nop5. Component of box C/D small ribonucleoprotein (sRNP) particles that contain rpl7ae, FlpA and nop5, plus a guide RNA.

In terms of biological role, involved in pre-rRNA and tRNA processing. Utilizes the methyl donor S-adenosyl-L-methionine to catalyze the site-specific 2'-hydroxyl methylation of ribose moieties in rRNA and tRNA. Site specificity is provided by a guide RNA that base pairs with the substrate. Methylation occurs at a characteristic distance from the sequence involved in base pairing with the guide RNA. The chain is Fibrillarin-like rRNA/tRNA 2'-O-methyltransferase from Pyrobaculum calidifontis (strain DSM 21063 / JCM 11548 / VA1).